The sequence spans 239 residues: MVQLWKLVLLCGLLAGTSESLLDIRGNDVLRRLISGLERGLGTFDSTIEIIFQNLKTELESRCLNDVVEETQQTENSLEGLISRIFQVVNRLTGVRIRNVQVPDITFEATSENSADVSIPITADVTVSLPLLGEIVKLDLNVDLQTSVSIETDAETGDSRVVVGECPNNPESISLTVLHRRPGLLNDVVDFGVNLVRQLVSSVVQHELCPRIRELLESLDTECIKKLIGEPQVTTQQEI.

A signal peptide spans 1 to 20 (MVQLWKLVLLCGLLAGTSES). Cysteine 166 and cysteine 209 are disulfide-bonded.

This sequence belongs to the BPI/LBP/Plunc superfamily. Plunc family. As to expression, detected in salivary tissues: parotid, submandibular and sublingual glands.

Its subcellular location is the secreted. The sequence is that of Short palate, lung and nasal epithelium carcinoma-associated protein 2A (SPLUNC2A) from Bos taurus (Bovine).